We begin with the raw amino-acid sequence, 281 residues long: Phosphatidylglycerol--prolipoprotein diacylglyceryl transferase (281 aa).

4 helical membrane-spanning segments follow: residues 29–49 (FYSL…GKMI), 64–84 (LFFY…VLFY), 100–120 (GGMS…FVSW), and 124–144 (LNWL…MFLG). Arginine 145 is an a 1,2-diacyl-sn-glycero-3-phospho-(1'-sn-glycerol) binding site. Helical transmembrane passes span 180–200 (QLYQ…LLFW), 209–229 (GVLV…NEFF), and 248–268 (GQWL…YALT).

Belongs to the Lgt family.

The protein localises to the cell inner membrane. The catalysed reaction is L-cysteinyl-[prolipoprotein] + a 1,2-diacyl-sn-glycero-3-phospho-(1'-sn-glycerol) = an S-1,2-diacyl-sn-glyceryl-L-cysteinyl-[prolipoprotein] + sn-glycerol 1-phosphate + H(+). The protein operates within protein modification; lipoprotein biosynthesis (diacylglyceryl transfer). Catalyzes the transfer of the diacylglyceryl group from phosphatidylglycerol to the sulfhydryl group of the N-terminal cysteine of a prolipoprotein, the first step in the formation of mature lipoproteins. The protein is Phosphatidylglycerol--prolipoprotein diacylglyceryl transferase of Erythrobacter litoralis (strain HTCC2594).